A 454-amino-acid chain; its full sequence is Histidine--tRNA ligase (454 aa).

The protein belongs to the class-II aminoacyl-tRNA synthetase family. In terms of assembly, homodimer.

It is found in the cytoplasm. It catalyses the reaction tRNA(His) + L-histidine + ATP = L-histidyl-tRNA(His) + AMP + diphosphate + H(+). The protein is Histidine--tRNA ligase of Bacteroides fragilis (strain YCH46).